Here is a 93-residue protein sequence, read N- to C-terminus: Large ribosomal subunit protein eL31 (93 aa).

It belongs to the eukaryotic ribosomal protein eL31 family.

This is Large ribosomal subunit protein eL31 from Methanosarcina mazei (strain ATCC BAA-159 / DSM 3647 / Goe1 / Go1 / JCM 11833 / OCM 88) (Methanosarcina frisia).